Reading from the N-terminus, the 230-residue chain is NAD(P)H-hydrate epimerase (230 aa).

The YjeF N-terminal domain occupies 11–218 (AIAVDQELFN…ALQRKYELNL (208 aa)). 61 to 65 (NNGGD) is a (6S)-NADPHX binding site. K(+)-binding residues include N62 and D126. (6S)-NADPHX contacts are provided by residues 130 to 136 (GFSFKPP) and D159. S162 serves as a coordination point for K(+).

It belongs to the NnrE/AIBP family. The cofactor is K(+).

It carries out the reaction (6R)-NADHX = (6S)-NADHX. The catalysed reaction is (6R)-NADPHX = (6S)-NADPHX. Functionally, catalyzes the epimerization of the S- and R-forms of NAD(P)HX, a damaged form of NAD(P)H that is a result of enzymatic or heat-dependent hydration. This is a prerequisite for the S-specific NAD(P)H-hydrate dehydratase to allow the repair of both epimers of NAD(P)HX. This Drosophila sechellia (Fruit fly) protein is NAD(P)H-hydrate epimerase.